A 122-amino-acid polypeptide reads, in one-letter code: Large ribosomal subunit protein uL14 (122 aa).

It belongs to the universal ribosomal protein uL14 family. In terms of assembly, part of the 50S ribosomal subunit. Forms a cluster with proteins L3 and L19. In the 70S ribosome, L14 and L19 interact and together make contacts with the 16S rRNA in bridges B5 and B8.

In terms of biological role, binds to 23S rRNA. Forms part of two intersubunit bridges in the 70S ribosome. The protein is Large ribosomal subunit protein uL14 of Lawsonia intracellularis (strain PHE/MN1-00).